A 120-amino-acid polypeptide reads, in one-letter code: Chaperonin GroEL (120 aa).

23–27 (DGTTT) serves as a coordination point for ATP.

This sequence belongs to the chaperonin (HSP60) family. As to quaternary structure, forms a cylinder of 14 subunits composed of two heptameric rings stacked back-to-back. Interacts with the co-chaperonin GroES.

The protein localises to the cytoplasm. The catalysed reaction is ATP + H2O + a folded polypeptide = ADP + phosphate + an unfolded polypeptide.. Together with its co-chaperonin GroES, plays an essential role in assisting protein folding. The GroEL-GroES system forms a nano-cage that allows encapsulation of the non-native substrate proteins and provides a physical environment optimized to promote and accelerate protein folding. In Mycobacterium asiaticum, this protein is Chaperonin GroEL.